The following is a 695-amino-acid chain: Lactotransferrin (695 aa).

The signal sequence occupies residues 1–6 (LGLCLA). 2 Transferrin-like domains span residues 12-339 (VRWC…NLRE) and 351-680 (VVWC…NLRR). 2 disulfide bridges follow: Cys15/Cys51 and Cys25/Cys42. Asp66 is a binding site for Fe(3+). The active site involves Lys79. A Fe(3+)-binding site is contributed by Tyr98. 5 cysteine pairs are disulfide-bonded: Cys121-Cys204, Cys163-Cys179, Cys166-Cys189, Cys176-Cys187, and Cys237-Cys251. 4 residues coordinate hydrogencarbonate: Thr123, Arg127, Ala129, and Gly130. N-linked (GlcNAc...) asparagine glycosylation is present at Asn143. Tyr198 serves as a coordination point for Fe(3+). His259 lines the Fe(3+) pocket. Catalysis depends on Ser265, which acts as the Nucleophile. An N-linked (GlcNAc...) asparagine glycan is attached at Asn287. Disulfide bonds link Cys354-Cys386 and Cys364-Cys377. Asp401 serves as a coordination point for Fe(3+). Cystine bridges form between Cys411–Cys690, Cys431–Cys653, Cys463–Cys538, Cys487–Cys681, Cys497–Cys511, Cys508–Cys521, Cys579–Cys593, and Cys631–Cys636. A D-glucose-binding site is contributed by Pro436. Tyr439 provides a ligand contact to Fe(3+). Positions 465, 469, 471, and 472 each coordinate hydrogencarbonate. The N-linked (GlcNAc...) asparagine glycan is linked to Asn482. A Fe(3+)-binding site is contributed by Tyr532. Asn600 is a binding site for D-glucose. His601 contacts Fe(3+). A D-glucose-binding site is contributed by Tyr666.

This sequence belongs to the transferrin family. As to quaternary structure, monomer. Found in a complex with LTF, CLU, EPPIN and SEMG1. Found in a complex with MPO and LTF; interacts directly with CP, allows Fe(3+) incorporation into LTF and activation of CP ferroxidase activity. Poly-N-acetyllactosaminic carbohydrate moiety seems to be needed for TLR4 activation.

It localises to the secreted. Its subcellular location is the cytoplasmic granule. Its function is as follows. Transferrins are iron binding transport proteins which can bind two Fe(3+) ions in association with the binding of an anion, usually bicarbonate. In terms of biological role, major iron-binding and multifunctional protein found in exocrine fluids such as breast milk and mucosal secretions. Has antimicrobial activity, which depends on the extracellular cation concentration. Antimicrobial properties include bacteriostasis, which is related to its ability to sequester free iron and thus inhibit microbial growth, as well as direct bactericidal properties leading to the release of lipopolysaccharides from the bacterial outer membrane. Can also prevent bacterial biofilm development in P.aeruginosa infection. Has weak antifungal activity against C.albicans. Has anabolic, differentiating and anti-apoptotic effects on osteoblasts and can also inhibit osteoclastogenesis, possibly playing a role in the regulation of bone growth. Promotes binding of species C adenoviruses to epithelial cells, promoting adenovirus infection. Can inhibit papillomavirus infections. Stimulates the TLR4 signaling pathway leading to NF-kappa-B activation and subsequent pro-inflammatory cytokine production while also interfering with the lipopolysaccharide (LPS)-stimulated TLR4 signaling. Inhibits neutrophil granulocyte migration to sites of apoptosis, when secreted by apoptotic cells. Stimulates VEGFA-mediated endothelial cell migration and proliferation. Binds heparin, chondroitin sulfate and possibly other glycosaminoglycans (GAGs). Also binds specifically to pneumococcal surface protein A (PspA), the lipid A portion of bacterial lipopolysaccharide (LPS), lysozyme and DNA. Lactoferricin binds to the bacterial surface and is crucial for the bactericidal functions. Has some antiviral activity against papillomavirus infection. N-terminal region shows strong antifungal activity against C.albicans. Contains two BBXB heparin-binding consensus sequences that appear to form the predominate functional GAG-binding site. Functionally, the lactotransferrin transferrin-like domain 1 functions as a serine protease of the peptidase S60 family that cuts arginine rich regions. This function contributes to the antimicrobial activity. Shows a preferential cleavage at -Arg-Ser-Arg-Arg-|- and -Arg-Arg-Ser-Arg-|-, and of Z-Phe-Arg-|-aminomethylcoumarin sites. The protein is Lactotransferrin (LTF) of Equus caballus (Horse).